Here is a 57-residue protein sequence, read N- to C-terminus: MPAIQPPLYPTFLLLILLSLIITLYAWIISTITYKTAMRHAALYQRSFFRWSFDHSL.

Residues 1–8 (MPAIQPPL) lie on the Virion surface side of the membrane. A helical membrane pass occupies residues 9 to 29 (YPTFLLLILLSLIITLYAWII). Over 30 to 57 (STITYKTAMRHAALYQRSFFRWSFDHSL) the chain is Intravirion.

The protein belongs to the rubulavirus small hydrophobic protein family. In terms of assembly, interacts with host TNFRSF1A, RIPK1 and IRAK1; these interactions interfere with host NF-kappa-B activation at the level of receptor complexes. Interacts with host protein UBQLN4.

It localises to the virion membrane. It is found in the host cell membrane. In terms of biological role, plays a role in the inhibition of the host NF-kappa-B pathway. This inhibition occurs at the receptor level, by preventing the signaling of TNFR1 as well as IL-1R and TLR3. The polypeptide is Small hydrophobic protein (SH) (Homo sapiens (Human)).